The sequence spans 709 residues: Polyribonucleotide nucleotidyltransferase (709 aa).

Positions 486 and 492 each coordinate Mg(2+). The KH domain maps to 553-612 (PRIHTIKINPDKIKDVIGKGGSVIRALTEETGTTIEIEDDGTVKIAATDGEKAKHAISRI). Positions 622–690 (GRIYAGKVTR…RQGRVRLSIK (69 aa)) constitute an S1 motif domain.

It belongs to the polyribonucleotide nucleotidyltransferase family. As to quaternary structure, component of the RNA degradosome, which is a multiprotein complex involved in RNA processing and mRNA degradation. Mg(2+) is required as a cofactor.

The protein resides in the cytoplasm. The enzyme catalyses RNA(n+1) + phosphate = RNA(n) + a ribonucleoside 5'-diphosphate. Functionally, involved in mRNA degradation. Catalyzes the phosphorolysis of single-stranded polyribonucleotides processively in the 3'- to 5'-direction. This chain is Polyribonucleotide nucleotidyltransferase, found in Photorhabdus luminescens (Xenorhabdus luminescens).